Here is a 92-residue protein sequence, read N- to C-terminus: DNA/RNA-binding protein Alba (92 aa).

K11 carries the N6-acetyllysine modification.

It belongs to the histone-like Alba family. In terms of processing, acetylated. Acetylation at Lys-11 decreases DNA-binding affinity.

The protein resides in the cytoplasm. It localises to the chromosome. Its function is as follows. Binds double-stranded DNA tightly but without sequence specificity. Involved in DNA compaction. The chain is DNA/RNA-binding protein Alba from Pyrobaculum islandicum (strain DSM 4184 / JCM 9189 / GEO3).